The sequence spans 277 residues: Putative envelope-preserving system protein Rv2742c (277 aa).

Over residues 31 to 54 the composition is skewed to basic and acidic residues; that stretch reads RDENRQRHAQVDVQRRRDQPERGQ. 3 disordered regions span residues 31-70, 113-133, and 180-210; these read RDEN…PDGR, QGSP…RLGR, and RQGS…HTAD. Positions 116–133 are enriched in basic residues; sequence PRRRERRRGQTAHQRLGR.

In terms of assembly, interacts with Rv2743c.

Functionally, involved in preservation of envelope integrity and tolerance to surface stress. Reverses the inhibitory effect of PspA on ClgR activity. Facilitates intracellular growth of M.tuberculosis. The polypeptide is Putative envelope-preserving system protein Rv2742c (Mycobacterium tuberculosis (strain ATCC 25618 / H37Rv)).